We begin with the raw amino-acid sequence, 524 residues long: MNRSQILTDRQQQELNKAILQYLEPMLTESSSDQEVYRSLQQILVPPSSSSSEAIVDNYLEKKWSTVLRLQRKIIDLENEVGTLRSIVDGQQSVSNGAASVISKDRINWLPNRASKSFPTQQNQLVMASVIHPVLPVIFGGCSDGSIIVWNIVNDDTSIPEKIIRAHTRSINKLAFSVEPADLSKDLTKSKTYIFASCSADLSIKIWDSSSYRHIRTLTGHDHTVSSVAFSQSNPDHLYSVSRDKTVKIWDLVNGYCVKSFTGHSEWVRDIDVASVNSQLSLNNMKVSAELGDFVVTCSNDQSVRVSHAESGAGLALLIGHTHVIEKVKFLPAVSNTILDKFLKENHAQFPSIPQELVSDEIFTTTLGYKYCISGGRDNLLKLWLIPPPTLIPHRSPLPAQHNNSQGWAIADLVGHQSWVKAIAIHPNGRFIFSGSDDKTIKVWDLANLNVTGSVKCVRTLSGHDGFINDLDFAAFNRDSGKEDKIKEDATEEESHQQLMKFIEGRMRCLFISGAADNSIKLWS.

Residues 65 to 90 (STVLRLQRKIIDLENEVGTLRSIVDG) are a coiled coil. WD repeat units follow at residues 121–160 (QQNQLVMASVIHPVLPVIFGGCSDGSIIVWNIVNDDTSIP), 166–217 (AHTR…HIRT), 220–262 (GHDH…KSFT), 277–317 (NSQL…GLAL), 353–394 (IPQE…LIPH), 415–454 (GHQSWVKAIAIHPNGRFIFSGSDDKTIKVWDLANLNVTGS), 463–492 (GHDGFINDLDFAAFNRDSGKEDKIKEDATE), and 493–524 (EESHQQLMKFIEGRMRCLFISGAADNSIKLWS).

This sequence belongs to the WD repeat LIS1/nudF family. In terms of assembly, self-associates. Interacts with NDL1 and dynein.

The protein resides in the cytoplasm. Its subcellular location is the cytoskeleton. The protein localises to the spindle pole. Positively regulates the activity of the minus-end directed microtubule motor protein dynein. Plays a central role in positioning the mitotic spindle at the bud neck during cell division. Targets cytoplasmic dynein to microtubule plus ends, thereby promoting dynein-mediated microtubule sliding along the bud cortex and consequently the movement of the mitotic spindle to the bud neck. In Scheffersomyces stipitis (strain ATCC 58785 / CBS 6054 / NBRC 10063 / NRRL Y-11545) (Yeast), this protein is Nuclear distribution protein PAC1.